A 363-amino-acid polypeptide reads, in one-letter code: Phosphoribosylformylglycinamidine cyclo-ligase (363 aa).

This sequence belongs to the AIR synthase family.

It is found in the cytoplasm. The enzyme catalyses 2-formamido-N(1)-(5-O-phospho-beta-D-ribosyl)acetamidine + ATP = 5-amino-1-(5-phospho-beta-D-ribosyl)imidazole + ADP + phosphate + H(+). The protein operates within purine metabolism; IMP biosynthesis via de novo pathway; 5-amino-1-(5-phospho-D-ribosyl)imidazole from N(2)-formyl-N(1)-(5-phospho-D-ribosyl)glycinamide: step 2/2. The sequence is that of Phosphoribosylformylglycinamidine cyclo-ligase from Bartonella tribocorum (strain CIP 105476 / IBS 506).